Consider the following 265-residue polypeptide: Phosphate import ATP-binding protein PstB (265 aa).

Residues valine 11–isoleucine 260 form the ABC transporter domain. Position 50–57 (glycine 50–serine 57) interacts with ATP.

The protein belongs to the ABC transporter superfamily. Phosphate importer (TC 3.A.1.7) family. The complex is composed of two ATP-binding proteins (PstB), two transmembrane proteins (PstC and PstA) and a solute-binding protein (PstS).

It is found in the cell inner membrane. It carries out the reaction phosphate(out) + ATP + H2O = ADP + 2 phosphate(in) + H(+). Its function is as follows. Part of the ABC transporter complex PstSACB involved in phosphate import. Responsible for energy coupling to the transport system. In Cereibacter sphaeroides (strain ATCC 17023 / DSM 158 / JCM 6121 / CCUG 31486 / LMG 2827 / NBRC 12203 / NCIMB 8253 / ATH 2.4.1.) (Rhodobacter sphaeroides), this protein is Phosphate import ATP-binding protein PstB.